We begin with the raw amino-acid sequence, 273 residues long: Soluble P-type ATPase-like phosphatase (273 aa).

The active-site 4-aspartylphosphate intermediate is D8.

It belongs to the cation transport ATPase (P-type) (TC 3.A.3) family. Type IB subfamily. Mg(2+) serves as cofactor.

Inhibited by orthovanadate. Most probably acts as a phosphatase in the cytosol. This is Soluble P-type ATPase-like phosphatase (patS) from Methanocaldococcus jannaschii (strain ATCC 43067 / DSM 2661 / JAL-1 / JCM 10045 / NBRC 100440) (Methanococcus jannaschii).